Reading from the N-terminus, the 754-residue chain is 5-methyltetrahydropteroyltriglutamate--homocysteine methyltransferase (754 aa).

5-methyltetrahydropteroyltri-L-glutamate is bound by residues 17–20 (RELK) and Lys-117. Residues 431 to 433 (IGS) and Glu-484 each bind L-homocysteine. L-methionine contacts are provided by residues 431–433 (IGS) and Glu-484. Residues 515-516 (RC) and Trp-561 contribute to the 5-methyltetrahydropteroyltri-L-glutamate site. Asp-599 contacts L-homocysteine. L-methionine is bound at residue Asp-599. Residue Glu-605 participates in 5-methyltetrahydropteroyltri-L-glutamate binding. Residues His-641, Cys-643, and Glu-665 each contribute to the Zn(2+) site. His-694 serves as the catalytic Proton donor. Position 726 (Cys-726) interacts with Zn(2+).

It belongs to the vitamin-B12 independent methionine synthase family. It depends on Zn(2+) as a cofactor.

It carries out the reaction 5-methyltetrahydropteroyltri-L-glutamate + L-homocysteine = tetrahydropteroyltri-L-glutamate + L-methionine. It participates in amino-acid biosynthesis; L-methionine biosynthesis via de novo pathway; L-methionine from L-homocysteine (MetE route): step 1/1. Catalyzes the transfer of a methyl group from 5-methyltetrahydrofolate to homocysteine resulting in methionine formation. The chain is 5-methyltetrahydropteroyltriglutamate--homocysteine methyltransferase from Salmonella arizonae (strain ATCC BAA-731 / CDC346-86 / RSK2980).